The following is a 456-amino-acid chain: Short chain dehydrogenase tazN (456 aa).

Residues Val45, Asp99, Asn126, Arg160, Tyr195, Lys199, and Thr229 each coordinate NADP(+). Tyr195 serves as the catalytic Proton donor. Residue Lys199 is the Lowers pKa of active site Tyr of the active site.

This sequence belongs to the short-chain dehydrogenases/reductases (SDR) family.

It participates in secondary metabolite biosynthesis. Short chain dehydrogenase; part of the gene cluster that mediates the biosynthesis of azaterrilone A and other azaphilones, a class of fungal metabolites characterized by a highly oxygenated pyrano-quinone bicyclic core and exhibiting a broad range of bioactivities. The first step of the pathway begins with the non-reducing polyketide synthase tazA that assembles one acetyl-CoA starter unit, five malonyl-CoA units, and catalyzes a series of Claisen condensations, methylation, PT-mediated cyclization, and finally releases the first hexaketide precursor through the R-domain. The tazA product then undergoes reduction on its terminal ketone and the following pyran-ring formation by yet undetermined enzyme(s). Dehydration and enoyl reduction, possibly involving the trans-enoyl reductase tazE leads to the next intermediate. TazD is predicted as an acetyltransferase and might catalyze the acetylation steps leading to the synthesis of azaterrilone A. Azaterrilone A is not the final product of the taz pathway and both the highly reducing polyketide synthase tazB and the dual enzyme tazHJ catalyze late steps of the pathway, leading to the production of the 2 final stereoisomers that contain additional polyketide modification whose structures have still to be determined. In Aspergillus terreus (strain NIH 2624 / FGSC A1156), this protein is Short chain dehydrogenase tazN.